Here is a 365-residue protein sequence, read N- to C-terminus: Protein YIM1 (365 aa).

Belongs to the YIM1 family.

It localises to the lipid droplet. The protein resides in the mitochondrion. The chain is Protein YIM1 (YIM1) from Saccharomyces cerevisiae (strain ATCC 204508 / S288c) (Baker's yeast).